The sequence spans 533 residues: Dipeptidase (533 aa).

The active site involves Cys3.

Belongs to the peptidase C69 family.

The enzyme catalyses an L-aminoacyl-L-amino acid + H2O = 2 an L-alpha-amino acid. Its function is as follows. Hydrolyzes a wide range of dipeptides. Highest activity against Ala-Gln. The chain is Dipeptidase from Bifidobacterium longum (strain NCC 2705).